Reading from the N-terminus, the 457-residue chain is Glutamate--tRNA ligase 2 (457 aa).

The 'HIGH' region signature appears at 9 to 19 (PSPTGRIHIGN). Positions 250–254 (GLSKR) match the 'KMSKS' region motif. K253 contributes to the ATP binding site.

The protein belongs to the class-I aminoacyl-tRNA synthetase family. Glutamate--tRNA ligase type 1 subfamily. In terms of assembly, monomer.

The protein localises to the cytoplasm. It catalyses the reaction tRNA(Glu) + L-glutamate + ATP = L-glutamyl-tRNA(Glu) + AMP + diphosphate. In terms of biological role, catalyzes the attachment of glutamate to tRNA(Glu) in a two-step reaction: glutamate is first activated by ATP to form Glu-AMP and then transferred to the acceptor end of tRNA(Glu). In Mesorhizobium japonicum (strain LMG 29417 / CECT 9101 / MAFF 303099) (Mesorhizobium loti (strain MAFF 303099)), this protein is Glutamate--tRNA ligase 2.